A 165-amino-acid polypeptide reads, in one-letter code: Peptide methionine sulfoxide reductase MsrA (165 aa).

Residue C11 is part of the active site.

Belongs to the MsrA Met sulfoxide reductase family.

The enzyme catalyses L-methionyl-[protein] + [thioredoxin]-disulfide + H2O = L-methionyl-(S)-S-oxide-[protein] + [thioredoxin]-dithiol. It carries out the reaction [thioredoxin]-disulfide + L-methionine + H2O = L-methionine (S)-S-oxide + [thioredoxin]-dithiol. In terms of biological role, has an important function as a repair enzyme for proteins that have been inactivated by oxidation. Catalyzes the reversible oxidation-reduction of methionine sulfoxide in proteins to methionine. The protein is Peptide methionine sulfoxide reductase MsrA of Ureaplasma urealyticum serovar 10 (strain ATCC 33699 / Western).